A 152-amino-acid polypeptide reads, in one-letter code: Snaclec coagulation factor IX/factor X-binding protein subunit A (152 aa).

A signal peptide spans 1–23; the sequence is MGRFIFMSFGLLVVAASLRGTGA. Residues 24–152 form the C-type lectin domain; it reads DCLSGWSSYE…GQQNPFVCEA (129 aa). 3 cysteine pairs are disulfide-bonded: cysteine 25–cysteine 36, cysteine 53–cysteine 150, and cysteine 125–cysteine 142. The Ca(2+) site is built by serine 64, glutamate 66, and glutamate 70. Position 151 (glutamate 151) interacts with Ca(2+).

The protein belongs to the snaclec family. Heterodimer of subunits A and B; disulfide-linked. Expressed by the venom gland.

The protein resides in the secreted. In terms of biological role, anticoagulant protein which binds to the gamma-carboxyglutamic acid-domain regions of factors IX (F9) and factor X (F10) in the presence of calcium with a 1 to 1 stoichiometry. This chain is Snaclec coagulation factor IX/factor X-binding protein subunit A, found in Protobothrops flavoviridis (Habu).